Consider the following 284-residue polypeptide: NAD/NADP-dependent indole-3-acetaldehyde reductase (284 aa).

Asp-49 is an NADPH binding site. Residues Tyr-54 and His-109 each act as proton donor in the active site. The NADPH site is built by Ser-143, Gln-165, Leu-196, Arg-201, Thr-239, Thr-240, Thr-241, Ser-242, Lys-243, and Arg-246.

Belongs to the aldo/keto reductase family. As to quaternary structure, monomer.

It is found in the cytoplasm. Its subcellular location is the nucleus. It catalyses the reaction indole-3-ethanol + NAD(+) = indole-3-acetaldehyde + NADH + H(+). It carries out the reaction indole-3-ethanol + NADP(+) = indole-3-acetaldehyde + NADPH + H(+). The sequence is that of NAD/NADP-dependent indole-3-acetaldehyde reductase from Schizosaccharomyces pombe (strain 972 / ATCC 24843) (Fission yeast).